The chain runs to 132 residues: Minor structural pilin EpdB (132 aa).

Residues 1-4 (MSKG) constitute a propeptide that is removed on maturation. Residues 9-19 (EFIVLFLALLV) carry the QXSXEXXXL motif.

In terms of processing, the N-terminus is probably cleaved by the prepilin peptidase EppA, which recognizes the class III signal sequence.

It localises to the secreted. The protein resides in the cell surface. The protein localises to the fimbrium. Its function is as follows. Minor component of the type IV-like pili. Essential for pili formation. This chain is Minor structural pilin EpdB, found in Methanococcus maripaludis (strain DSM 14266 / JCM 13030 / NBRC 101832 / S2 / LL).